Here is a 303-residue protein sequence, read N- to C-terminus: Polyisoprenyl-teichoic acid--peptidoglycan teichoic acid transferase TagU (303 aa).

Residues 1–4 (MKKK) lie on the Cytoplasmic side of the membrane. Residues 5–25 (ILFWVLGILGVLIIGGGIYAY) form a helical; Signal-anchor for type II membrane protein membrane-spanning segment. Residues 26 to 303 (NVYSSVSNTL…KLRTHLEVTK (278 aa)) lie on the Extracellular side of the membrane.

This sequence belongs to the LytR/CpsA/Psr (LCP) family.

It localises to the cell membrane. Its pathway is cell wall biogenesis. Functionally, may catalyze the final step in cell wall teichoic acid biosynthesis, the transfer of the anionic cell wall polymers (APs) from their lipid-linked precursor to the cell wall peptidoglycan (PG). This is Polyisoprenyl-teichoic acid--peptidoglycan teichoic acid transferase TagU from Bacillus anthracis (strain A0248).